Here is a 444-residue protein sequence, read N- to C-terminus: Aspartate--tRNA(Asp/Asn) ligase (444 aa).

Glu176 provides a ligand contact to L-aspartate. Residues 198-201 (QLFK) form an aspartate region. Residue Arg220 coordinates L-aspartate. Residues 220–222 (RAE), 228–230 (RHL), and Glu367 each bind ATP. Positions 367 and 370 each coordinate Mg(2+). 2 residues coordinate L-aspartate: Ser370 and Arg374. ATP is bound at residue 415–418 (GCER).

The protein belongs to the class-II aminoacyl-tRNA synthetase family. Type 2 subfamily. Homodimer. Requires Mg(2+) as cofactor.

It is found in the cytoplasm. The enzyme catalyses tRNA(Asx) + L-aspartate + ATP = L-aspartyl-tRNA(Asx) + AMP + diphosphate. Functionally, aspartyl-tRNA synthetase with relaxed tRNA specificity since it is able to aspartylate not only its cognate tRNA(Asp) but also tRNA(Asn). Reaction proceeds in two steps: L-aspartate is first activated by ATP to form Asp-AMP and then transferred to the acceptor end of tRNA(Asp/Asn). The polypeptide is Aspartate--tRNA(Asp/Asn) ligase (Methanosarcina acetivorans (strain ATCC 35395 / DSM 2834 / JCM 12185 / C2A)).